Consider the following 47-residue polypeptide: Diuretic hormone 2 (47 aa).

Belongs to the sauvagine/corticotropin-releasing factor/urotensin I family.

The protein resides in the secreted. In terms of biological role, stimulates fluid secretion by the Malpighian tubules. Increases cyclic AMP production in Malpighian tubules. The protein is Diuretic hormone 2 of Tenebrio molitor (Yellow mealworm beetle).